A 633-amino-acid chain; its full sequence is Phosphomethylpyrimidine synthase (633 aa).

Residues Asn245, Met274, Tyr303, His339, 359–361, 400–403, and Glu439 contribute to the substrate site; these read SRG and DGLR. His443 provides a ligand contact to Zn(2+). Tyr466 is a binding site for substrate. A Zn(2+)-binding site is contributed by His507. [4Fe-4S] cluster contacts are provided by Cys587, Cys590, and Cys595.

Belongs to the ThiC family. As to quaternary structure, homodimer. [4Fe-4S] cluster serves as cofactor.

It carries out the reaction 5-amino-1-(5-phospho-beta-D-ribosyl)imidazole + S-adenosyl-L-methionine = 4-amino-2-methyl-5-(phosphooxymethyl)pyrimidine + CO + 5'-deoxyadenosine + formate + L-methionine + 3 H(+). It functions in the pathway cofactor biosynthesis; thiamine diphosphate biosynthesis. Its function is as follows. Catalyzes the synthesis of the hydroxymethylpyrimidine phosphate (HMP-P) moiety of thiamine from aminoimidazole ribotide (AIR) in a radical S-adenosyl-L-methionine (SAM)-dependent reaction. The protein is Phosphomethylpyrimidine synthase of Neisseria meningitidis serogroup C (strain 053442).